The following is a 715-amino-acid chain: Probable ubiquitin thioesterase DG1039 (715 aa).

A coiled-coil region spans residues K86–N302. The span at N287–N302 shows a compositional bias: basic and acidic residues. Disordered regions lie at residues N287 to T367, Q398 to Y450, and L502 to A527. Positions T339–Q349 are enriched in polar residues. Low complexity predominate over residues Q398–Q409. Composition is skewed to polar residues over residues S410 to N427 and L502 to S525. Positions I537–L666 constitute an MPN domain. Zn(2+)-binding residues include H615, H617, D628, H630, C672, H678, and H680. The JAMM motif motif lies at H615 to D628.

This sequence belongs to the peptidase M67C family. It depends on Zn(2+) as a cofactor.

In terms of biological role, may be a zinc metalloprotease that specifically cleaves ubiquitin chains. This is Probable ubiquitin thioesterase DG1039 (DG1039) from Dictyostelium discoideum (Social amoeba).